The following is a 109-amino-acid chain: Transcription initiation factor IIA subunit 2 (109 aa).

This sequence belongs to the TFIIA subunit 2 family. In terms of assembly, TFIIA is a heterodimer of the large unprocessed subunit 1 and a small subunit gamma. It was originally believed to be a heterotrimer of an alpha (p35), a beta (p19) and a gamma subunit (p12). Interacts with NCOA6 general coactivator. TFIIA forms a complex with TBP. Interacts with HSF1 (via transactivation domain). Part of TBP-based Pol II pre-initiation complex (PIC), in which Pol II core assembles with general transcription factors and other specific initiation factors including GTF2E1, GTF2E2, GTF2F1, GTF2F2, TCEA1, ERCC2, ERCC3, GTF2H2, GTF2H3, GTF2H4, GTF2H5, GTF2A1, GTF2A2, GTF2B and TBP; this large multi-subunit PIC complex mediates DNA unwinding and targets Pol II core to the transcription start site where the first phosphodiester bond forms.

It is found in the nucleus. Its function is as follows. TFIIA is a component of the transcription machinery of RNA polymerase II and plays an important role in transcriptional activation. TFIIA in a complex with TBP mediates transcriptional activity. This chain is Transcription initiation factor IIA subunit 2 (Gtf2a2), found in Rattus norvegicus (Rat).